Reading from the N-terminus, the 489-residue chain is Toxin coregulated pilus biosynthesis outer membrane protein C (489 aa).

An N-terminal signal peptide occupies residues 1–16 (MKKTIISTLVIGLVSG). Cysteine 17 carries the N-palmitoyl cysteine lipid modification. Cysteine 17 carries the S-diacylglycerol cysteine lipid modification. 4 helical membrane-spanning segments follow: residues 174–190 (FSSS…SSGL), 294–308 (AISL…GASY), 402–417 (QLVS…LPTV), and 442–457 (NYIQ…GGGT).

The protein localises to the cell membrane. Its function is as follows. Involved in TCP pilus biogenesis. The chain is Toxin coregulated pilus biosynthesis outer membrane protein C (tcpC) from Vibrio cholerae serotype O1 (strain ATCC 39315 / El Tor Inaba N16961).